We begin with the raw amino-acid sequence, 1937 residues long: Collagen-like protein 7 (1937 aa).

2 N-linked (GlcNAc...) asparagine; by host glycosylation sites follow: N6 and N21. Disordered regions lie at residues 88 to 248 (CKGN…KGDK), 294 to 531 (NLKG…PDLG), 583 to 643 (LKGD…NQGV), and 670 to 1144 (IKGD…DTAT). Collagen-like domains follow at residues 102–161 (GPKG…KGEK), 168–227 (GEKG…KGDI), 297–356 (GEKG…KGEK), 363–422 (GDKG…IGEK), and 453–512 (GDKG…KGDK). Residues 296 to 514 (KGEKGDKGNK…DKGDKGDKGD (219 aa)) show a composition bias toward basic and acidic residues. An N-linked (GlcNAc...) asparagine; by host glycan is attached at N515. 3 stretches are compositionally biased toward basic and acidic residues: residues 584 to 605 (KGDK…KGDK), 614 to 625 (KGEKGDKGDKGD), and 670 to 899 (IKGD…KGDK). Collagen-like domains follow at residues 672 to 731 (GDKG…KGDK), 735 to 854 (GNKG…KGNI), 867 to 926 (GLKG…KGDK), 936 to 995 (GIKG…KGDK), and 1023 to 1142 (GSKG…KGDT). A glycan (N-linked (GlcNAc...) asparagine; by host) is linked at N902. The segment covering 907 to 1141 (YKGDKGDKGS…DKGDKGDKGD (235 aa)) has biased composition (basic and acidic residues). N-linked (GlcNAc...) asparagine; by host glycosylation is found at N1178, N1192, N1212, N1217, N1245, N1246, N1255, N1317, N1422, N1427, N1432, N1443, N1452, N1477, N1494, N1506, N1513, N1533, N1598, N1619, N1620, N1632, N1641, N1663, N1664, N1672, N1682, N1683, N1732, N1735, N1746, N1756, N1784, N1842, and N1934.

Post-translationally, may be hydroxylated on lysine by the viral-encoded procollagen-lysine,2-oxoglutarate 5-dioxygenase.

Its subcellular location is the virion. Functionally, may participate in the formation of a layer of cross-linked glycosylated fibrils at the viral surface thus giving it a hairy-like appearance. This is Collagen-like protein 7 from Acanthamoeba polyphaga mimivirus (APMV).